The sequence spans 279 residues: Ribosome maturation factor RimP (279 aa).

Residues 197–279 (LAEEGEPEEQ…GAPALRPTPK (83 aa)) are disordered. The segment covering 199–210 (EEGEPEEQEEGG) has biased composition (acidic residues).

It belongs to the RimP family.

The protein localises to the cytoplasm. Required for maturation of 30S ribosomal subunits. This Methylocella silvestris (strain DSM 15510 / CIP 108128 / LMG 27833 / NCIMB 13906 / BL2) protein is Ribosome maturation factor RimP.